The primary structure comprises 237 residues: Keratin-associated protein 5-5 (237 aa).

8 consecutive repeat copies span residues 62-65 (CCVP), 68-71 (CCKP), 74-77 (CCVP), 159-162 (CCKP), 178-181 (CCKP), 188-191 (CCKP), 198-201 (CCKP), and 227-230 (CCVP). The segment at 62 to 230 (CCVPVCCCKP…CCCQSSCCVP (169 aa)) is 8 X 4 AA repeats of C-C-X-P.

The protein belongs to the KRTAP type 5 family. In terms of assembly, interacts with hair keratins. In terms of tissue distribution, restricted to hair root, not detected in any other tissues.

In terms of biological role, in the hair cortex, hair keratin intermediate filaments are embedded in an interfilamentous matrix, consisting of hair keratin-associated protein (KRTAP), which are essential for the formation of a rigid and resistant hair shaft through their extensive disulfide bond cross-linking with abundant cysteine residues of hair keratins. The matrix proteins include the high-sulfur and high-glycine-tyrosine keratins. The chain is Keratin-associated protein 5-5 (KRTAP5-5) from Homo sapiens (Human).